The following is a 333-amino-acid chain: Holliday junction branch migration complex subunit RuvB (333 aa).

The segment at I4–Y185 is large ATPase domain (RuvB-L). ATP contacts are provided by residues I24, R25, G66, K69, T70, T71, E132–Y134, R175, Y185, and R222. T70 provides a ligand contact to Mg(2+). Residues S186–N256 are small ATPAse domain (RuvB-S). The head domain (RuvB-H) stretch occupies residues K259–G333. Residues R295, R314, and R319 each coordinate DNA.

It belongs to the RuvB family. Homohexamer. Forms an RuvA(8)-RuvB(12)-Holliday junction (HJ) complex. HJ DNA is sandwiched between 2 RuvA tetramers; dsDNA enters through RuvA and exits via RuvB. An RuvB hexamer assembles on each DNA strand where it exits the tetramer. Each RuvB hexamer is contacted by two RuvA subunits (via domain III) on 2 adjacent RuvB subunits; this complex drives branch migration. In the full resolvosome a probable DNA-RuvA(4)-RuvB(12)-RuvC(2) complex forms which resolves the HJ.

It localises to the cytoplasm. It catalyses the reaction ATP + H2O = ADP + phosphate + H(+). In terms of biological role, the RuvA-RuvB-RuvC complex processes Holliday junction (HJ) DNA during genetic recombination and DNA repair, while the RuvA-RuvB complex plays an important role in the rescue of blocked DNA replication forks via replication fork reversal (RFR). RuvA specifically binds to HJ cruciform DNA, conferring on it an open structure. The RuvB hexamer acts as an ATP-dependent pump, pulling dsDNA into and through the RuvAB complex. RuvB forms 2 homohexamers on either side of HJ DNA bound by 1 or 2 RuvA tetramers; 4 subunits per hexamer contact DNA at a time. Coordinated motions by a converter formed by DNA-disengaged RuvB subunits stimulates ATP hydrolysis and nucleotide exchange. Immobilization of the converter enables RuvB to convert the ATP-contained energy into a lever motion, pulling 2 nucleotides of DNA out of the RuvA tetramer per ATP hydrolyzed, thus driving DNA branch migration. The RuvB motors rotate together with the DNA substrate, which together with the progressing nucleotide cycle form the mechanistic basis for DNA recombination by continuous HJ branch migration. Branch migration allows RuvC to scan DNA until it finds its consensus sequence, where it cleaves and resolves cruciform DNA. The polypeptide is Holliday junction branch migration complex subunit RuvB (Hamiltonella defensa subsp. Acyrthosiphon pisum (strain 5AT)).